Consider the following 739-residue polypeptide: Endoglucanase F (739 aa).

The N-terminal stretch at 1 to 27 (MKKILAFLLTVALVAVVAIPQAVVSFA) is a signal peptide. The tract at residues 28 to 470 (ADFNYGEALQ…AKMYEKYGGE (443 aa)) is catalytic. Asp-84 functions as the Nucleophile in the catalytic mechanism. Catalysis depends on residues His-400, Asp-438, and Glu-447. In terms of domain architecture, CBM3 spans 480 to 639 (TPGEEFYVEA…NVRVWGKVPD (160 aa)). The region spanning 664–737 (PGIMLGDVNF…ILKLIEKFPA (74 aa)) is the Dockerin domain.

The protein belongs to the glycosyl hydrolase 9 (cellulase E) family. Ca(2+) is required as a cofactor.

The enzyme catalyses Endohydrolysis of (1-&gt;4)-beta-D-glucosidic linkages in cellulose, lichenin and cereal beta-D-glucans.. In terms of biological role, this enzyme catalyzes the endohydrolysis of 1,4-beta-glucosidic linkages in cellulose, lichenin and cereal beta-D-glucans. This is Endoglucanase F (celF) from Acetivibrio thermocellus (strain ATCC 27405 / DSM 1237 / JCM 9322 / NBRC 103400 / NCIMB 10682 / NRRL B-4536 / VPI 7372) (Clostridium thermocellum).